The primary structure comprises 393 residues: Elongation factor Tu (393 aa).

The 194-residue stretch at 10–203 (KPHVNIGTIG…AVDEFIPEPL (194 aa)) folds into the tr-type G domain. The segment at 19–26 (GHVDHGKT) is G1. 19-26 (GHVDHGKT) provides a ligand contact to GTP. Mg(2+) is bound at residue Thr26. Residues 60 to 64 (GITIS) form a G2 region. The tract at residues 81–84 (DCPG) is G3. GTP-binding positions include 81-85 (DCPGH) and 136-139 (NKVD). Residues 136–139 (NKVD) form a G4 region. The segment at 173–175 (SAL) is G5.

The protein belongs to the TRAFAC class translation factor GTPase superfamily. Classic translation factor GTPase family. EF-Tu/EF-1A subfamily. Monomer.

It is found in the cytoplasm. It carries out the reaction GTP + H2O = GDP + phosphate + H(+). In terms of biological role, GTP hydrolase that promotes the GTP-dependent binding of aminoacyl-tRNA to the A-site of ribosomes during protein biosynthesis. The protein is Elongation factor Tu of Chlorobium phaeobacteroides (strain DSM 266 / SMG 266 / 2430).